The sequence spans 329 residues: Ribosomal RNA small subunit methyltransferase H (329 aa).

S-adenosyl-L-methionine-binding positions include 34–36 (GGH), Asp-59, Phe-86, Asp-112, and Gln-119.

This sequence belongs to the methyltransferase superfamily. RsmH family.

Its subcellular location is the cytoplasm. The catalysed reaction is cytidine(1402) in 16S rRNA + S-adenosyl-L-methionine = N(4)-methylcytidine(1402) in 16S rRNA + S-adenosyl-L-homocysteine + H(+). In terms of biological role, specifically methylates the N4 position of cytidine in position 1402 (C1402) of 16S rRNA. The chain is Ribosomal RNA small subunit methyltransferase H from Chlorobium phaeobacteroides (strain DSM 266 / SMG 266 / 2430).